The sequence spans 263 residues: Proteasome subunit beta type-4 (263 aa).

Position 1 is an N-acetylmethionine (M1). The propeptide occupies M1–R44. Phosphoserine is present on S26. The residue at position 101 (Y101) is a Phosphotyrosine.

Belongs to the peptidase T1B family. In terms of assembly, the 26S proteasome consists of a 20S proteasome core and two 19S regulatory subunits. The 20S proteasome core is a barrel-shaped complex made of 28 subunits that are arranged in four stacked rings. The two outer rings are each formed by seven alpha subunits, and the two inner rings are formed by seven beta subunits. The proteolytic activity is exerted by three beta-subunits PSMB5, PSMB6 and PSMB7. Forms a ternary complex with SMAD1 and OAZ1 before PSMB4 is incorporated into the 20S proteasome. Interacts with PRPF19.

It is found in the cytoplasm. It localises to the nucleus. Its function is as follows. Non-catalytic component of the 20S core proteasome complex involved in the proteolytic degradation of most intracellular proteins. This complex plays numerous essential roles within the cell by associating with different regulatory particles. Associated with two 19S regulatory particles, forms the 26S proteasome and thus participates in the ATP-dependent degradation of ubiquitinated proteins. The 26S proteasome plays a key role in the maintenance of protein homeostasis by removing misfolded or damaged proteins that could impair cellular functions, and by removing proteins whose functions are no longer required. Associated with the PA200 or PA28, the 20S proteasome mediates ubiquitin-independent protein degradation. This type of proteolysis is required in several pathways including spermatogenesis (20S-PA200 complex) or generation of a subset of MHC class I-presented antigenic peptides (20S-PA28 complex). SMAD1/OAZ1/PSMB4 complex mediates the degradation of the CREBBP/EP300 repressor SNIP1. The polypeptide is Proteasome subunit beta type-4 (Psmb4) (Rattus norvegicus (Rat)).